The chain runs to 154 residues: 6,7-dimethyl-8-ribityllumazine synthase (154 aa).

5-amino-6-(D-ribitylamino)uracil-binding positions include F22, 56 to 58 (AFE), and 80 to 82 (AVI). 85-86 (ST) contacts (2S)-2-hydroxy-3-oxobutyl phosphate. The Proton donor role is filled by H88. F113 is a 5-amino-6-(D-ribitylamino)uracil binding site. R127 is a binding site for (2S)-2-hydroxy-3-oxobutyl phosphate.

It belongs to the DMRL synthase family.

It catalyses the reaction (2S)-2-hydroxy-3-oxobutyl phosphate + 5-amino-6-(D-ribitylamino)uracil = 6,7-dimethyl-8-(1-D-ribityl)lumazine + phosphate + 2 H2O + H(+). The protein operates within cofactor biosynthesis; riboflavin biosynthesis; riboflavin from 2-hydroxy-3-oxobutyl phosphate and 5-amino-6-(D-ribitylamino)uracil: step 1/2. In terms of biological role, catalyzes the formation of 6,7-dimethyl-8-ribityllumazine by condensation of 5-amino-6-(D-ribitylamino)uracil with 3,4-dihydroxy-2-butanone 4-phosphate. This is the penultimate step in the biosynthesis of riboflavin. This chain is 6,7-dimethyl-8-ribityllumazine synthase, found in Clostridium beijerinckii (strain ATCC 51743 / NCIMB 8052) (Clostridium acetobutylicum).